Consider the following 340-residue polypeptide: Phosphoribosylformylglycinamidine cyclo-ligase (340 aa).

It belongs to the AIR synthase family.

It is found in the cytoplasm. It catalyses the reaction 2-formamido-N(1)-(5-O-phospho-beta-D-ribosyl)acetamidine + ATP = 5-amino-1-(5-phospho-beta-D-ribosyl)imidazole + ADP + phosphate + H(+). It participates in purine metabolism; IMP biosynthesis via de novo pathway; 5-amino-1-(5-phospho-D-ribosyl)imidazole from N(2)-formyl-N(1)-(5-phospho-D-ribosyl)glycinamide: step 2/2. The chain is Phosphoribosylformylglycinamidine cyclo-ligase from Streptococcus gordonii (strain Challis / ATCC 35105 / BCRC 15272 / CH1 / DL1 / V288).